Consider the following 376-residue polypeptide: Probable tRNA sulfurtransferase (376 aa).

Residues 51-152 (EENLKNLKYV…KNSVYVFDKS (102 aa)) form the THUMP domain. Residues 170-171 (LI), 195-196 (TF), R252, G274, and Q283 each bind ATP.

The protein belongs to the ThiI family.

It is found in the cytoplasm. It carries out the reaction [ThiI sulfur-carrier protein]-S-sulfanyl-L-cysteine + a uridine in tRNA + 2 reduced [2Fe-2S]-[ferredoxin] + ATP + H(+) = [ThiI sulfur-carrier protein]-L-cysteine + a 4-thiouridine in tRNA + 2 oxidized [2Fe-2S]-[ferredoxin] + AMP + diphosphate. The catalysed reaction is [ThiS sulfur-carrier protein]-C-terminal Gly-Gly-AMP + S-sulfanyl-L-cysteinyl-[cysteine desulfurase] + AH2 = [ThiS sulfur-carrier protein]-C-terminal-Gly-aminoethanethioate + L-cysteinyl-[cysteine desulfurase] + A + AMP + 2 H(+). It participates in cofactor biosynthesis; thiamine diphosphate biosynthesis. Catalyzes the ATP-dependent transfer of a sulfur to tRNA to produce 4-thiouridine in position 8 of tRNAs, which functions as a near-UV photosensor. Also catalyzes the transfer of sulfur to the sulfur carrier protein ThiS, forming ThiS-thiocarboxylate. This is a step in the synthesis of thiazole, in the thiamine biosynthesis pathway. The sulfur is donated as persulfide by IscS. The polypeptide is Probable tRNA sulfurtransferase (Mycoplasmopsis synoviae (strain 53) (Mycoplasma synoviae)).